We begin with the raw amino-acid sequence, 631 residues long: DNA mismatch repair protein MutL (631 aa).

Disordered regions lie at residues 337–362 (PHSP…ELQS) and 400–429 (AVQS…RAEL).

It belongs to the DNA mismatch repair MutL/HexB family.

This protein is involved in the repair of mismatches in DNA. It is required for dam-dependent methyl-directed DNA mismatch repair. May act as a 'molecular matchmaker', a protein that promotes the formation of a stable complex between two or more DNA-binding proteins in an ATP-dependent manner without itself being part of a final effector complex. The sequence is that of DNA mismatch repair protein MutL from Shewanella oneidensis (strain ATCC 700550 / JCM 31522 / CIP 106686 / LMG 19005 / NCIMB 14063 / MR-1).